Reading from the N-terminus, the 160-residue chain is Transcription elongation factor GreA (160 aa).

Residues 10–37 (TLDGKAKLENELQELKTVKRKEVVERIK) adopt a coiled-coil conformation.

The protein belongs to the GreA/GreB family.

In terms of biological role, necessary for efficient RNA polymerase transcription elongation past template-encoded arresting sites. The arresting sites in DNA have the property of trapping a certain fraction of elongating RNA polymerases that pass through, resulting in locked ternary complexes. Cleavage of the nascent transcript by cleavage factors such as GreA or GreB allows the resumption of elongation from the new 3'terminus. GreA releases sequences of 2 to 3 nucleotides. This chain is Transcription elongation factor GreA, found in Listeria innocua serovar 6a (strain ATCC BAA-680 / CLIP 11262).